We begin with the raw amino-acid sequence, 198 residues long: MAASLVGKKIVFVTGNAKKLEEVIQILGDNFPCTLEAQKIDLPEYQGEPDEISIQKCREAARQVQGPVLVEDTCLCFNALGGLPGPYIKWFLQKLKPEGLHQLLAGFEDKSAYALCTFALSTGDPSQPVLLFRGQTSGQIVMPRGSRDFGWDPCFQPDGYEQTYAEMPKSEKNTISHRFRALHKLQEYFSVAAGAGDH.

Alanine 2 carries the post-translational modification N-acetylalanine. 14 to 19 (TGNAKK) lines the ITP pocket. Glutamate 44 contacts Mg(2+). Residues lysine 56, 72-73 (DT), and lysine 89 each bind ITP. The residue at position 146 (serine 146) is a Phosphoserine. ITP-binding positions include 149 to 152 (FGWD), lysine 172, and 177 to 178 (HR).

This sequence belongs to the HAM1 NTPase family. Homodimer. It depends on Mg(2+) as a cofactor. Mn(2+) is required as a cofactor.

It localises to the cytoplasm. The catalysed reaction is ITP + H2O = IMP + diphosphate + H(+). It catalyses the reaction dITP + H2O = dIMP + diphosphate + H(+). It carries out the reaction XTP + H2O = XMP + diphosphate + H(+). The enzyme catalyses N(6)-hydroxy-dATP + H2O = N(6)-hydroxy-dAMP + diphosphate + H(+). In terms of biological role, pyrophosphatase that hydrolyzes the non-canonical purine nucleotides inosine triphosphate (ITP), deoxyinosine triphosphate (dITP) as well as 2'-deoxy-N-6-hydroxylaminopurine triphosphate (dHAPTP) and xanthosine 5'-triphosphate (XTP) to their respective monophosphate derivatives. The enzyme does not distinguish between the deoxy- and ribose forms. Probably excludes non-canonical purines from RNA and DNA precursor pools, thus preventing their incorporation into RNA and DNA and avoiding chromosomal lesions. The polypeptide is Inosine triphosphate pyrophosphatase (Itpa) (Mus musculus (Mouse)).